A 369-amino-acid chain; its full sequence is MDMAYELLNGSQPWLSSPFDLNGSVATANSSNQTEPYYDLTSNAVLTFIYFVVCIIGLCGNTLVIYVILRYAKMKTITNIYILNLAIADELFMLGLPFLAMQVALVHWPFGKAICRVVMTVDGINQFTSIFCLTVMSIDRYLAVVHPIKSAKWRRPRTAKMINVAVWGVSLLVILPIMIYAGLRSNQWGRSSCTINWPGESGAWYTGFIIYAFILGFLVPLTIICLCYLFIIIKVKSSGIRVGSSKRKKSEKKVTRMVSIVVAVFIFCWLPFYIFNVSSVSVAISPTPALKGMFDFVVVLTYANSCANPILYAFLSDNFKKSFQNVLCLVKVSGTDDGERSDSKQDKSRLNETTETQRTLLNGDLQTSI.

The Extracellular segment spans residues 1 to 43; sequence MDMAYELLNGSQPWLSSPFDLNGSVATANSSNQTEPYYDLTSN. N-linked (GlcNAc...) asparagine glycans are attached at residues Asn-9, Asn-22, Asn-29, and Asn-32. The helical transmembrane segment at 44–67 threads the bilayer; the sequence is AVLTFIYFVVCIIGLCGNTLVIYV. Topologically, residues 68–78 are cytoplasmic; sequence ILRYAKMKTIT. Residues 79 to 103 traverse the membrane as a helical segment; sequence NIYILNLAIADELFMLGLPFLAMQV. The Extracellular portion of the chain corresponds to 104–118; sequence ALVHWPFGKAICRVV. Residues Cys-115 and Cys-193 are joined by a disulfide bond. Residues 119-138 form a helical membrane-spanning segment; it reads MTVDGINQFTSIFCLTVMSI. The Cytoplasmic segment spans residues 139–161; that stretch reads DRYLAVVHPIKSAKWRRPRTAKM. A helical transmembrane segment spans residues 162–181; that stretch reads INVAVWGVSLLVILPIMIYA. Topologically, residues 182–207 are extracellular; it reads GLRSNQWGRSSCTINWPGESGAWYTG. Residues 208 to 229 traverse the membrane as a helical segment; it reads FIIYAFILGFLVPLTIICLCYL. Topologically, residues 230 to 253 are cytoplasmic; that stretch reads FIIIKVKSSGIRVGSSKRKKSEKK. Residues 254–278 traverse the membrane as a helical segment; it reads VTRMVSIVVAVFIFCWLPFYIFNVS. Over 279–288 the chain is Extracellular; that stretch reads SVSVAISPTP. The chain crosses the membrane as a helical span at residues 289–303; sequence ALKGMFDFVVVLTYA. Topologically, residues 304–369 are cytoplasmic; that stretch reads NSCANPILYA…LLNGDLQTSI (66 aa). A lipid anchor (S-palmitoyl cysteine) is attached at Cys-328. 3 positions are modified to phosphoserine: Ser-341, Ser-343, and Ser-348. Phosphothreonine occurs at positions 353 and 354.

This sequence belongs to the G-protein coupled receptor 1 family. As to quaternary structure, homodimer and heterodimer with SSTR3 and SSTR5. Heterodimerization with SSTR3 inactivates SSTR3 receptor function. Heterodimerization with SSTR5 is enhanced by agonist stimulation of SSTR2 and increases SSTR2 cell growth inhibition activity. Following agonist stimulation, homodimers dissociate into monomers which is required for receptor internalization. Interacts with beta-arrestin; this interaction is necessary for receptor internalization and is destabilized by heterodimerization with SSTR5 which results in increased recycling of SSTR2 to the cell surface. Interacts (via C-terminus) with SHANK1 (via PDZ domain). Phosphorylated on serine and threonine residues in response to agonist stimulation, leading to receptor desensitization and rapid internalization. Phosphorylated to a greater extent on serine than threonine residues. Threonine phosphorylation is required for arrestin binding and receptor endocytosis but is not necessary for desensitization.

The protein resides in the cell membrane. Its subcellular location is the cytoplasm. Receptor for somatostatin-14 and -28. This receptor is coupled via pertussis toxin sensitive G proteins to inhibition of adenylyl cyclase. In addition it stimulates phosphotyrosine phosphatase and PLC via pertussis toxin insensitive as well as sensitive G proteins. Inhibits calcium entry by suppressing voltage-dependent calcium channels. Acts as the functionally dominant somatostatin receptor in pancreatic alpha- and beta-cells where it mediates the inhibitory effect of somatostatin-14 on hormone secretion. Inhibits cell growth through enhancement of MAPK1 and MAPK2 phosphorylation and subsequent up-regulation of CDKN1B. Stimulates neuronal migration and axon outgrowth and may participate in neuron development and maturation during brain development. Mediates negative regulation of insulin receptor signaling through PTPN6. Inactivates SSTR3 receptor function following heterodimerization. In Sus scrofa (Pig), this protein is Somatostatin receptor type 2 (SSTR2).